Here is a 75-residue protein sequence, read N- to C-terminus: UPF0270 protein PputGB1_1339 (75 aa).

It belongs to the UPF0270 family.

In Pseudomonas putida (strain GB-1), this protein is UPF0270 protein PputGB1_1339.